The following is a 786-amino-acid chain: Cyclin-F (786 aa).

Positions 20-28 (KRRIRRRPR) match the Nuclear localization signal 1 motif. One can recognise an F-box domain in the interval 29–76 (NLTILSLPEDVLFHILKWLSVEDILAVRAVHSQLKDLVDNHASVWACA). A Cyclin N-terminal domain is found at 288 to 405 (QASQAVSKQQ…EIVSALEGKI (118 aa)). 4 short sequence motifs (d box) span residues 310–313 (RYIL), 343–346 (RRRL), 349–352 (RYRL), and 351–354 (RLQL). Disordered stretches follow at residues 564 to 593 (SPSG…TAEL) and 675 to 738 (TQIP…HTQP). Residues 568–574 (RRTKRKR) carry the Nuclear localization signal 2 motif. The segment at 582-766 (RGSFVTTPTA…ESSVPQQQVK (185 aa)) is PEST. Residues 697 to 714 (VTTSGYSSVSTASPTSSV) are compositionally biased toward low complexity. The span at 723–738 (QPTSVLSLDSDSHTQP) shows a compositional bias: polar residues. The D box 5 motif lies at 767-770 (RINL).

It belongs to the cyclin family. Cyclin AB subfamily. Component of the SCF(CCNF) complex consisting of CUL1, RBX1, SKP1 and CCNF. Interacts with SKP1. Interacts with CUL1. Interacts with CCNB1; interaction is required for nuclear localization of CCNB1. Interacts with CCP110; this interaction leads to CCP110 ubiquitination and degradation via the proteasome pathway. Interacts (via the Cyclin N-terminal domain) with MYBL2/BMYB. Interacts with FZR1/CDH1 (via N-terminus). Interacts with RRM2 (via Cy motif and when phosphorylated at 'Thr-33'); the interaction occurs exclusively in G2 and early M. Interacts with CDC6 (via Cy motif); the interaction takes place during G2 and M phase. Post-translationally, degraded when the spindle assembly checkpoint is activated during the G2-M transition. Degradation depends on the C-terminal PEST sequence. Phosphorylated just before cells enter into mitosis. In terms of processing, ubiquitinated by the anaphase-promoting complex (APC/C); leading to its degradation by the proteasome. As to expression, widely expressed, with expression detected in the heart, brain, placenta, lung, liver, skeletal muscle, kidney and pancreas.

It localises to the nucleus. The protein localises to the cytoplasm. Its subcellular location is the perinuclear region. The protein resides in the cytoskeleton. It is found in the microtubule organizing center. It localises to the centrosome. The protein localises to the centriole. Its function is as follows. Substrate recognition component of a SCF (SKP1-CUL1-F-box protein) E3 ubiquitin-protein ligase complex which mediates the ubiquitination and subsequent proteasomal degradation of target proteins. The SCF(CCNF) E3 ubiquitin-protein ligase complex is an integral component of the ubiquitin proteasome system (UPS) and links proteasome degradation to the cell cycle. Mediates the substrate recognition and the proteasomal degradation of various target proteins involved in the regulation of cell cycle progression and in the maintenance of genome stability. Mediates the ubiquitination and proteasomal degradation of CP110 during G2 phase, thereby acting as an inhibitor of centrosome reduplication. In G2, mediates the ubiquitination and subsequent degradation of ribonucleotide reductase RRM2, thereby maintaining a balanced pool of dNTPs and genome integrity. In G2, mediates the ubiquitination and proteasomal degradation of CDC6, thereby suppressing DNA re-replication and preventing genome instability. Involved in the ubiquitination and degradation of the substrate adapter CDH1 of the anaphase-promoting complex (APC/C), thereby acting as an antagonist of APC/C in regulating G1 progression and S phase entry. May play a role in the G2 cell cycle checkpoint control after DNA damage, possibly by promoting the ubiquitination of MYBL2/BMYB. The chain is Cyclin-F (CCNF) from Homo sapiens (Human).